The chain runs to 146 residues: Large ribosomal subunit protein uL11 (146 aa).

Belongs to the universal ribosomal protein uL11 family. Part of the ribosomal stalk of the 50S ribosomal subunit. Interacts with L10 and the large rRNA to form the base of the stalk. L10 forms an elongated spine to which L12 dimers bind in a sequential fashion forming a multimeric L10(L12)X complex. In terms of processing, one or more lysine residues are methylated.

Its function is as follows. Forms part of the ribosomal stalk which helps the ribosome interact with GTP-bound translation factors. The polypeptide is Large ribosomal subunit protein uL11 (Buchnera aphidicola subsp. Baizongia pistaciae (strain Bp)).